We begin with the raw amino-acid sequence, 982 residues long: ATP-dependent DNA helicase Q5 (982 aa).

The 175-residue stretch at 39–213 (MAVVKGAEDV…FAALHLKQPV (175 aa)) folds into the Helicase ATP-binding domain. An ATP-binding site is contributed by 52 to 59 (MPTGAGKS). The DEAH box motif lies at 157 to 160 (DEAH). Residues 241–398 (NLRDFCLKAL…NKPSDKATLL (158 aa)) form the Helicase C-terminal domain. Residues Cys412, Cys428, Cys432, and Cys435 each contribute to the Zn(2+) site. Residues Ser489 and Ser492 each carry the phosphoserine modification. The segment at 491-621 (GSGDEGRDEA…ASKDGQLYDM (131 aa)) is interaction with POLR2A. Thr527 is subject to Phosphothreonine. The tract at residues 653–726 (PKRVGAGFSK…ALGSSVNCGD (74 aa)) is interaction with RAD51. Disordered regions lie at residues 675–797 (GKSH…PGKC) and 812–893 (QTEG…AQEP). Ser728 carries the phosphoserine; by CDK1 modification.

Belongs to the helicase family. RecQ subfamily. In terms of assembly, monomer. Interacts with TOP2A, TOP3A and TOP3B. Interacts with RNA polymerase II subunit POLR2A. Identified in a complex with the RNA polymerase II core bound to DNA. Interacts with RAD51. Interacts with WRN; this interaction stimulates WRN helicase activity on DNA fork duplexes. Interacts with MUS1; this interaction promotes MUS81-dependent mitotic DNA synthesis. It depends on Zn(2+) as a cofactor. Phosphorylated by CDK1 at Ser-728; this phosphorylation is required for RECQL5-mediated disruption of RAD51 filaments on stalled replication forks.

The protein localises to the nucleus. Its subcellular location is the nucleoplasm. It catalyses the reaction Couples ATP hydrolysis with the unwinding of duplex DNA by translocating in the 3'-5' direction.. It carries out the reaction ATP + H2O = ADP + phosphate + H(+). Functionally, DNA helicase that plays an important role in DNA replication, transcription and repair. Binds to the RNA polymerase II subunit POLR2A during transcription elongation and suppresses transcription-associated genomic instability. Also associates with POLR1A and enforces the stability of ribosomal DNA arrays. Plays an important role in mitotic chromosome separation after cross-over events and cell cycle progress. Mechanistically, removes RAD51 filaments protecting stalled replication forks at common fragile sites and stimulates MUS81-EME1 endonuclease leading to mitotic DNA synthesis. Required for efficient DNA repair, including repair of inter-strand cross-links. Stimulates DNA decatenation mediated by TOP2A. Prevents sister chromatid exchange and homologous recombination. The protein is ATP-dependent DNA helicase Q5 (Recql5) of Mus musculus (Mouse).